We begin with the raw amino-acid sequence, 201 residues long: uncharacterized protein (201 aa).

Coiled-coil stretches lie at residues 3–43 (YMDD…EVYK) and 76–120 (TGQV…AKTK).

This is an uncharacterized protein from Archaeoglobus fulgidus (strain ATCC 49558 / DSM 4304 / JCM 9628 / NBRC 100126 / VC-16).